The primary structure comprises 367 residues: Inositol-3-phosphate synthase (367 aa).

NAD(+) contacts are provided by aspartate 78, alanine 137, tyrosine 157, serine 200, aspartate 235, and lysine 248.

The protein belongs to the myo-inositol 1-phosphate synthase family. NAD(+) serves as cofactor.

The enzyme catalyses D-glucose 6-phosphate = 1D-myo-inositol 3-phosphate. Its function is as follows. Key enzyme in myo-inositol biosynthesis pathway that catalyzes the conversion of glucose 6-phosphate to 1D-myo-inositol 3-phosphate in a NAD-dependent manner. The polypeptide is Inositol-3-phosphate synthase (ino1) (Mycobacterium tuberculosis (strain CDC 1551 / Oshkosh)).